Here is a 66-residue protein sequence, read N- to C-terminus: Small vasohibin-binding protein (66 aa).

Residues 1–23 (MDPPARKEKPKVKEPVSRIEKAK) show a composition bias toward basic and acidic residues. The interval 1–32 (MDPPARKEKPKVKEPVSRIEKAKQKSAQQELK) is disordered. Residues 5–52 (ARKEKPKVKEPVSRIEKAKQKSAQQELKQRQRAEIYALNRVMTELEQQ) are a coiled coil.

Belongs to the SVBP family. In terms of assembly, interacts with VASH1 and VASH2.

It localises to the cytoplasm. The protein resides in the secreted. It is found in the cytoskeleton. Enhances the tyrosine carboxypeptidase activity of VASH1 and VASH2, thereby promoting the removal of the C-terminal tyrosine residue of alpha-tubulin. Also required to enhance the solubility and secretion of VASH1 and VASH2. Plays a role in axon and excitatory synapse formation. This Bos taurus (Bovine) protein is Small vasohibin-binding protein.